We begin with the raw amino-acid sequence, 153 residues long: UPF0756 membrane protein Pjdr2_2290 (153 aa).

5 consecutive transmembrane segments (helical) span residues 6–26 (LILV…IATA), 50–70 (LELG…SGKV), 75–95 (LIAA…AVAA), 111–131 (MVVG…GIPV), and 132–152 (GPLM…LMSG).

It belongs to the UPF0756 family.

It is found in the cell membrane. In Paenibacillus sp. (strain JDR-2), this protein is UPF0756 membrane protein Pjdr2_2290.